The primary structure comprises 61 residues: Small ribosomal subunit protein uS14 (61 aa).

Residues Cys-24, Cys-27, Cys-40, and Cys-43 each contribute to the Zn(2+) site.

It belongs to the universal ribosomal protein uS14 family. Zinc-binding uS14 subfamily. In terms of assembly, part of the 30S ribosomal subunit. Contacts proteins S3 and S10. Requires Zn(2+) as cofactor.

Functionally, binds 16S rRNA, required for the assembly of 30S particles and may also be responsible for determining the conformation of the 16S rRNA at the A site. This Frankia alni (strain DSM 45986 / CECT 9034 / ACN14a) protein is Small ribosomal subunit protein uS14.